Consider the following 329-residue polypeptide: Tryptophan--tRNA ligase (329 aa).

ATP is bound by residues 9–11 (QPS) and 17–18 (GN). Residues 10–18 (PSGIPTIGN) carry the 'HIGH' region motif. Asp133 contributes to the L-tryptophan binding site. Residues 145-147 (GDD), Val184, and 193-197 (KMSKS) contribute to the ATP site. Residues 193 to 197 (KMSKS) carry the 'KMSKS' region motif.

It belongs to the class-I aminoacyl-tRNA synthetase family. In terms of assembly, homodimer.

The protein localises to the cytoplasm. The catalysed reaction is tRNA(Trp) + L-tryptophan + ATP = L-tryptophyl-tRNA(Trp) + AMP + diphosphate + H(+). Catalyzes the attachment of tryptophan to tRNA(Trp). The polypeptide is Tryptophan--tRNA ligase (Staphylococcus epidermidis (strain ATCC 35984 / DSM 28319 / BCRC 17069 / CCUG 31568 / BM 3577 / RP62A)).